Consider the following 366-residue polypeptide: Glycerol-3-phosphate dehydrogenase [NAD(+)], glycosomal (366 aa).

NAD(+)-binding positions include 22–27 (GSGAFG), Phe97, Lys125, and Ala157. Lys125 is a substrate binding site. Lys210 (proton acceptor) is an active-site residue. NAD(+)-binding residues include Arg274, Val298, and Glu300. 274–275 (RN) lines the substrate pocket. A Microbody targeting signal motif is present at residues 364 to 366 (SKL).

It belongs to the NAD-dependent glycerol-3-phosphate dehydrogenase family. Homodimer.

The protein localises to the glycosome. The enzyme catalyses sn-glycerol 3-phosphate + NAD(+) = dihydroxyacetone phosphate + NADH + H(+). In Leishmania mexicana, this protein is Glycerol-3-phosphate dehydrogenase [NAD(+)], glycosomal (GPD).